The sequence spans 235 residues: Ribitol-5-phosphate cytidylyltransferase (235 aa).

Residues 7-10 (LAGG), 82-88 (GADRNTS), and S113 each bind CTP.

This sequence belongs to the IspD/TarI cytidylyltransferase family. TarI subfamily.

It carries out the reaction D-ribitol 5-phosphate + CTP + H(+) = CDP-L-ribitol + diphosphate. It functions in the pathway cell wall biogenesis; poly(ribitol phosphate) teichoic acid biosynthesis. Functionally, catalyzes the transfer of the cytidylyl group of CTP to D-ribitol 5-phosphate. The protein is Ribitol-5-phosphate cytidylyltransferase of Streptococcus pneumoniae (strain Hungary19A-6).